Consider the following 110-residue polypeptide: Large ribosomal subunit protein uL22 (110 aa).

The protein belongs to the universal ribosomal protein uL22 family. Part of the 50S ribosomal subunit.

This protein binds specifically to 23S rRNA; its binding is stimulated by other ribosomal proteins, e.g. L4, L17, and L20. It is important during the early stages of 50S assembly. It makes multiple contacts with different domains of the 23S rRNA in the assembled 50S subunit and ribosome. Functionally, the globular domain of the protein is located near the polypeptide exit tunnel on the outside of the subunit, while an extended beta-hairpin is found that lines the wall of the exit tunnel in the center of the 70S ribosome. In Geobacter metallireducens (strain ATCC 53774 / DSM 7210 / GS-15), this protein is Large ribosomal subunit protein uL22.